The primary structure comprises 310 residues: Olfactory receptor 4C11 (310 aa).

The Extracellular segment spans residues 1–23 (MQQNNSVPEFILLGLTQDPLRQK). N-linked (GlcNAc...) asparagine glycosylation is present at Asn-4. The chain crosses the membrane as a helical span at residues 24–47 (IVFVIFLIFYMGTVVGNMLIIVTI). Over 48–55 (KSSRTLGS) the chain is Cytoplasmic. A helical membrane pass occupies residues 56–77 (PMYFFLFYLSFADSCFSTSTAP). Topologically, residues 78 to 98 (RLIVDALSEKKIITYNECMTQ) are extracellular. A disulfide bridge connects residues Cys-95 and Cys-187. The chain crosses the membrane as a helical span at residues 99–118 (VFALHLFGCMEIFVLILMAV). Residues 119–137 (DRYVAICKPLRYPTIMSQQ) are Cytoplasmic-facing. A helical membrane pass occupies residues 138–156 (VCIILIVLAWIGSLIHSTA). Residues 157–193 (QIILALRLPFCGPYLIDHYCCDLQPLLKLACMDTYMI) lie on the Extracellular side of the membrane. Residues 194-217 (NLLLVSNSGAICSSSFMILIISYI) traverse the membrane as a helical segment. The Cytoplasmic portion of the chain corresponds to 218 to 233 (VILHSLRNHSAKGKKK). Residues 234-256 (ALSACTSHIIVVILFFGPCIFIY) form a helical membrane-spanning segment. The Extracellular segment spans residues 257 to 267 (TRPPTTFPMDK). The chain crosses the membrane as a helical span at residues 268 to 287 (MVAVFYTIGTPFLNPLIYTL). Over 288 to 310 (RNAEVKNAMRKLWHGKIISENKG) the chain is Cytoplasmic.

The protein belongs to the G-protein coupled receptor 1 family.

Its subcellular location is the cell membrane. Its function is as follows. Odorant receptor. In Homo sapiens (Human), this protein is Olfactory receptor 4C11 (OR4C11).